Reading from the N-terminus, the 491-residue chain is Acetyl-coenzyme A carboxylase carboxyl transferase subunit beta, chloroplastic (491 aa).

Residues 26–49 (ARPRPIGNTNGSQDPSINDRDKNG) form a disordered region. Residues 32–41 (GNTNGSQDPS) are compositionally biased toward polar residues. The region spanning 222-491 (LWVQCDNCYG…PLNHNSQVKR (270 aa)) is the CoA carboxyltransferase N-terminal domain. Zn(2+)-binding residues include cysteine 226, cysteine 229, cysteine 245, and cysteine 248. The C4-type zinc finger occupies 226-248 (CDNCYGLNYKKIFSSKMNICEQC).

This sequence belongs to the AccD/PCCB family. In terms of assembly, acetyl-CoA carboxylase is a heterohexamer composed of biotin carboxyl carrier protein, biotin carboxylase and 2 subunits each of ACCase subunit alpha and ACCase plastid-coded subunit beta (accD). Zn(2+) serves as cofactor.

The protein resides in the plastid. Its subcellular location is the chloroplast stroma. It carries out the reaction N(6)-carboxybiotinyl-L-lysyl-[protein] + acetyl-CoA = N(6)-biotinyl-L-lysyl-[protein] + malonyl-CoA. Its pathway is lipid metabolism; malonyl-CoA biosynthesis; malonyl-CoA from acetyl-CoA: step 1/1. Its function is as follows. Component of the acetyl coenzyme A carboxylase (ACC) complex. Biotin carboxylase (BC) catalyzes the carboxylation of biotin on its carrier protein (BCCP) and then the CO(2) group is transferred by the transcarboxylase to acetyl-CoA to form malonyl-CoA. The polypeptide is Acetyl-coenzyme A carboxylase carboxyl transferase subunit beta, chloroplastic (Ceratophyllum demersum (Rigid hornwort)).